The sequence spans 659 residues: A-type ATP synthase subunit I (659 aa).

8 consecutive transmembrane segments (helical) span residues 376–396 (FFFGFMLTDFVYGLLLGVISA), 415–435 (IMLWASAFTMVLGILFGSYCG), 460–480 (VMALAIGLGHLFTGYILGFIV), 489–509 (AAILEQLPWVFIIIGITLFAL), 513–533 (LGIPQIAFKAVFGVGLALFVV), 542–562 (MAVLLTISDFFGFIGNWLSYA), 566–586 (ALALATSGIALVINIIANMVW), and 590–610 (IGPIPLGILIGIVILIGGHIF).

The protein belongs to the V-ATPase 116 kDa subunit family. As to quaternary structure, has multiple subunits with at least A(3), B(3), C, D, E, F, H, I and proteolipid K(x).

Its subcellular location is the cell membrane. Functionally, component of the A-type ATP synthase that produces ATP from ADP in the presence of a proton gradient across the membrane. The polypeptide is A-type ATP synthase subunit I (Pyrococcus abyssi (strain GE5 / Orsay)).